We begin with the raw amino-acid sequence, 474 residues long: Protein CyaE (474 aa).

Positions methionine 1–alanine 31 are cleaved as a signal peptide.

It belongs to the outer membrane factor (OMF) (TC 1.B.17) family.

The protein localises to the cell outer membrane. In terms of biological role, cyaE is necessary for transport of calmodulin-sensitive adenylate cyclase-hemolysin (cyclolysin). The chain is Protein CyaE (cyaE) from Bordetella pertussis (strain Tohama I / ATCC BAA-589 / NCTC 13251).